The primary structure comprises 289 residues: ATP synthase gamma chain (289 aa).

This sequence belongs to the ATPase gamma chain family. F-type ATPases have 2 components, CF(1) - the catalytic core - and CF(0) - the membrane proton channel. CF(1) has five subunits: alpha(3), beta(3), gamma(1), delta(1), epsilon(1). CF(0) has three main subunits: a, b and c.

Its subcellular location is the cell inner membrane. Its function is as follows. Produces ATP from ADP in the presence of a proton gradient across the membrane. The gamma chain is believed to be important in regulating ATPase activity and the flow of protons through the CF(0) complex. The chain is ATP synthase gamma chain from Haemophilus influenzae (strain 86-028NP).